The following is a 399-amino-acid chain: RNA polymerase sigma factor SigA1 (399 aa).

The segment at 1–73 (MTQLISIDKE…DEDSVGEDED (73 aa)) is disordered. Over residues 60 to 73 (DAIDDEDSVGEDED) the composition is skewed to acidic residues. Residues 167–237 (MVQSNLRLVV…TRAIADQSRT (71 aa)) are sigma-70 factor domain-2. The Interaction with polymerase core subunit RpoC signature appears at 191–194 (DLIQ). Positions 246–321 (ETISRIKKTT…EADGETPEDE (76 aa)) are sigma-70 factor domain-3. The segment at 334–387 (VLSTLSPRERDVLRLRYGLDDGRMKTLEEIGQLFNVTRERIRQIEAKALRKLRH) is sigma-70 factor domain-4. Positions 360-379 (LEEIGQLFNVTRERIRQIEA) form a DNA-binding region, H-T-H motif.

Belongs to the sigma-70 factor family. RpoD/SigA subfamily. In terms of assembly, interacts transiently with the RNA polymerase catalytic core.

It localises to the cytoplasm. Functionally, sigma factors are initiation factors that promote the attachment of RNA polymerase to specific initiation sites and are then released. This sigma factor is the primary sigma factor during exponential growth. In Synechococcus elongatus (strain ATCC 33912 / PCC 7942 / FACHB-805) (Anacystis nidulans R2), this protein is RNA polymerase sigma factor SigA1.